Here is a 199-residue protein sequence, read N- to C-terminus: UPF0329 protein ECU01_0120/ECU01_1490/ECU08_0050 (199 aa).

The protein belongs to the UPF0329 family.

The sequence is that of UPF0329 protein ECU01_0120/ECU01_1490/ECU08_0050 from Encephalitozoon cuniculi (strain GB-M1) (Microsporidian parasite).